A 370-amino-acid chain; its full sequence is D-aspartate oxidase (370 aa).

Ile15, Ala49, Ser50, Gly54, Val166, Arg317, Gly346, and Gln348 together coordinate FAD. The Microbody targeting signal motif lies at 368-370 (ARL).

It belongs to the DAMOX/DASOX family. As to quaternary structure, homotetramer. Requires FAD as cofactor.

It is found in the peroxisome matrix. It catalyses the reaction D-aspartate + O2 + H2O = oxaloacetate + H2O2 + NH4(+). The enzyme catalyses D-glutamate + O2 + H2O = H2O2 + 2-oxoglutarate + NH4(+). With respect to regulation, inhibited by malonate and D-malate. Very mildly inhibited by benzoate, ethylenediaminetetraacetic acid (EDTA), crotonate and anthranilate. May be very mildly inhibited by meso-tartrate. Its function is as follows. Selectively catalyzes the oxidative deamination of acidic amino acids. Protects the organism from the toxicity of D-amino acids. Enables the organism to utilize D-amino acids as a source of nutrients. Enables the organism to utilize D-aspartate as a source of nitrogen and carbon. This is D-aspartate oxidase from Vanrija humicola (Yeast).